The following is a 695-amino-acid chain: ATP-dependent DNA helicase II subunit 2 (695 aa).

Residues 229 to 461 (FSIGNRDSKD…IDFAVSNYID (233 aa)) enclose the Ku domain.

Belongs to the ku80 family. Heterodimer of pku70 and pku80.

Its subcellular location is the nucleus. The protein resides in the chromosome. It is found in the telomere. The catalysed reaction is ATP + H2O = ADP + phosphate + H(+). Functionally, single-stranded DNA-dependent ATP-dependent helicase. Involved in non-homologous end joining (NHEJ) DNA double strand break repair. DNA-binding is sequence-independent but has a high affinity to nicks in double-stranded DNA and to the ends of duplex DNA. Binds to naturally occurring chromosomal ends, and therefore provides chromosomal end protection. Required also for telomere recombination to repair telomeric ends in the absence of telomerase. ku70, of the ku70/ku80 heterodimer, binds to the stem loop of tlc1, the RNA component of telomerase. Involved in telomere maintenance. Interacts with telomeric repeats and subtelomeric sequences thereby controlling telomere length and protecting against subtelomeric rearrangement. Required for mating-type switching. The protein is ATP-dependent DNA helicase II subunit 2 (pku80) of Schizosaccharomyces pombe (strain 972 / ATCC 24843) (Fission yeast).